The following is a 191-amino-acid chain: MGKSCKVVVCGQASVGKTSILEQLLYGNHVVGSEMIETQEDIYVGSIETDRGVREQVRFYDTRGLRDGAELPKHCFSCTDGYVLVYSTDSRESFQRVELLKKEIDKSKDKKEVTIVVLGNKCDLQEQRRVDPDVAQHWAKSEKVKLWEVSVADRRSLLEPFIYLASKMTQPQSKSAFPLSRKNKGSGSLDG.

Residues 1-191 are small GTPase-like; that stretch reads MGKSCKVVVC…KNKGSGSLDG (191 aa). 11 to 18 is a GTP binding site; the sequence is GQASVGKT. The Effector region motif lies at 35–43; the sequence is MIETQEDIY. Residues 61–65 and 120–123 each bind GTP; these read DTRGL and NKCD. The interval 169-191 is disordered; that stretch reads TQPQSKSAFPLSRKNKGSGSLDG.

This sequence belongs to the small GTPase superfamily. Ras family. KappaB-Ras subfamily. As to quaternary structure, interacts with both NF-kappa-B inhibitor alpha (NFKBIA) and beta (NFKBIB) in vitro. However, it probably only interacts with NFKBIB in vivo. Interacts with GFOD1.

Its subcellular location is the cytoplasm. In terms of biological role, atypical Ras-like protein that acts as a potent regulator of NF-kappa-B activity by preventing the degradation of NF-kappa-B inhibitor beta (NFKBIB) by most signals, explaining why NFKBIB is more resistant to degradation. May act by blocking phosphorylation of NFKBIB and nuclear localization of p65/RELA NF-kappa-B subunit. It is unclear whether it acts as a GTPase. Both GTP- and GDP-bound forms block phosphorylation of NFKBIB. This is NF-kappa-B inhibitor-interacting Ras-like protein 2 (Nkiras2) from Mus musculus (Mouse).